A 311-amino-acid polypeptide reads, in one-letter code: GTPase Era (311 aa).

Residues 16 to 188 (HAGFVAIVGK…REQLLEVLPE (173 aa)) form the Era-type G domain. Positions 24 to 31 (GKPNVGKS) are G1. 24-31 (GKPNVGKS) is a binding site for GTP. Residues 50 to 54 (QTTRR) form a G2 region. The tract at residues 71–74 (DTPG) is G3. GTP-binding positions include 71–75 (DTPGL) and 133–136 (NKTD). Residues 133–136 (NKTD) form a G4 region. Positions 166-168 (LSA) are G5. The 78-residue stretch at 219 to 296 (LRDELPYAVA…YLGLEVIVIP (78 aa)) folds into the KH type-2 domain.

The protein belongs to the TRAFAC class TrmE-Era-EngA-EngB-Septin-like GTPase superfamily. Era GTPase family. Monomer.

It is found in the cytoplasm. It localises to the cell membrane. Its function is as follows. An essential GTPase that binds both GDP and GTP, with rapid nucleotide exchange. Plays a role in 16S rRNA processing and 30S ribosomal subunit biogenesis and possibly also in cell cycle regulation and energy metabolism. The chain is GTPase Era from Deinococcus radiodurans (strain ATCC 13939 / DSM 20539 / JCM 16871 / CCUG 27074 / LMG 4051 / NBRC 15346 / NCIMB 9279 / VKM B-1422 / R1).